The chain runs to 503 residues: Probable cytosol aminopeptidase (503 aa).

2 residues coordinate Mn(2+): Lys274 and Asp279. The active site involves Lys286. Asp297, Asp356, and Glu358 together coordinate Mn(2+). Residue Arg360 is part of the active site.

Belongs to the peptidase M17 family. Mn(2+) is required as a cofactor.

It is found in the cytoplasm. The enzyme catalyses Release of an N-terminal amino acid, Xaa-|-Yaa-, in which Xaa is preferably Leu, but may be other amino acids including Pro although not Arg or Lys, and Yaa may be Pro. Amino acid amides and methyl esters are also readily hydrolyzed, but rates on arylamides are exceedingly low.. The catalysed reaction is Release of an N-terminal amino acid, preferentially leucine, but not glutamic or aspartic acids.. In terms of biological role, presumably involved in the processing and regular turnover of intracellular proteins. Catalyzes the removal of unsubstituted N-terminal amino acids from various peptides. In Burkholderia lata (strain ATCC 17760 / DSM 23089 / LMG 22485 / NCIMB 9086 / R18194 / 383), this protein is Probable cytosol aminopeptidase.